A 211-amino-acid polypeptide reads, in one-letter code: UPF0502 protein PC1_1804 (211 aa).

The interval 168–188 (SGDASDAAPEEEGAGDNSHQL) is disordered.

Belongs to the UPF0502 family.

This Pectobacterium carotovorum subsp. carotovorum (strain PC1) protein is UPF0502 protein PC1_1804.